The primary structure comprises 137 residues: Large ribosomal subunit protein uL16 (137 aa).

Belongs to the universal ribosomal protein uL16 family. Part of the 50S ribosomal subunit.

Functionally, binds 23S rRNA and is also seen to make contacts with the A and possibly P site tRNAs. The chain is Large ribosomal subunit protein uL16 from Methylorubrum extorquens (strain CM4 / NCIMB 13688) (Methylobacterium extorquens).